We begin with the raw amino-acid sequence, 112 residues long: MSRALLKFVRVSPTKARLIAREVQGMNAELALASLEFMPNKAAGIISKVIASAVANGDFEPEEVEITSCRVDKAAVMKRWRPRARGTASRIIKPTAHILVEVGPAKKDGEDA.

The protein belongs to the universal ribosomal protein uL22 family. As to quaternary structure, part of the 50S ribosomal subunit.

In terms of biological role, this protein binds specifically to 23S rRNA; its binding is stimulated by other ribosomal proteins, e.g. L4, L17, and L20. It is important during the early stages of 50S assembly. It makes multiple contacts with different domains of the 23S rRNA in the assembled 50S subunit and ribosome. Functionally, the globular domain of the protein is located near the polypeptide exit tunnel on the outside of the subunit, while an extended beta-hairpin is found that lines the wall of the exit tunnel in the center of the 70S ribosome. The sequence is that of Large ribosomal subunit protein uL22 from Sulfurovum sp. (strain NBC37-1).